We begin with the raw amino-acid sequence, 291 residues long: Neugrin (291 aa).

Residues 1 to 15 (MAVTLSLLLSGRVCA) form the signal peptide. Residues 27-49 (VADPGPIGREPDPDSDWEPEERE) are disordered. Positions 39–49 (PDSDWEPEERE) are enriched in acidic residues. Ser-41 is modified (phosphoserine). Asn-158 carries N-linked (GlcNAc...) asparagine glycosylation. The disordered stretch occupies residues 224–270 (VAAPLGHPRELQKYSSDSESPRRTGNGALPSDQKLEELKAEEPGNFS). Over residues 256–265 (QKLEELKAEE) the composition is skewed to basic and acidic residues.

This sequence belongs to the neugrin family. Forms a regulatory protein-RNA complex, consisting of RCC1L, NGRN, RPUSD3, RPUSD4, TRUB2, FASTKD2 and 16S mt-rRNA. Interacts with 16S mt-rRNA; this interaction is direct.

The protein localises to the nucleus. It localises to the secreted. The protein resides in the mitochondrion membrane. Its function is as follows. Plays an essential role in mitochondrial ribosome biogenesis. As a component of a functional protein-RNA module, consisting of RCC1L, NGRN, RPUSD3, RPUSD4, TRUB2, FASTKD2 and 16S mitochondrial ribosomal RNA (16S mt-rRNA), controls 16S mt-rRNA abundance and is required for intra-mitochondrial translation of core subunits of the oxidative phosphorylation system. The polypeptide is Neugrin (NGRN) (Pongo abelii (Sumatran orangutan)).